Here is a 594-residue protein sequence, read N- to C-terminus: MPAHDDDIREGAGRSARGSDDLAAQVTYLEQEIAVLRRRLRDAADAPRGGRAVEERINELQATVAGLTSQNERLVATLREARDQIVALKEEIDRLAQPPSGFGVFLEDVGEGNADIFTGGRKMRVSVSPSIEGGTLRPGQEVMLNEALNVVAAFGFESVGEIVSLKEILEDGSRALVTGRTDEEHVVRLAEPLLESGVKLRPGDALLMEPRSGYVYEVIPKSEVEDLVLEEVPDISYLEIGGLDGQIELIRDAVELPYLHPDLFKEHKLRPPKGVLLYGPPGCGKTLIAKAVANSLAKKVAEVTGSDNVKSYFLNIKGPELLNKYVGETERHIRLVFQRAREKASEGAPVIVFFDEMDSLFRTRGSGISSDVENTIVPQLLSEIDGVEGLENVIVIGASNREDMIDPAILRPGRLDVKIKIERPDAEAAKDIFGKYVTTELPLHADDLAEHSGDRQETVTAMIQATVERMYSEIDENRFLEVTYANGDKEVMYFRDFNSGAMIQNIVDRAKKSAIKDFLDHKQKGLRVSHLLGACVDEFKENEDLPNTTNPDDWARISGKKGERIVFIRTLVTGKRGGDTGRSIDTIASTGQYL.

Residues 20–98 (DDLAAQVTYL…KEEIDRLAQP (79 aa)) adopt a coiled-coil conformation. Residue 282-287 (GCGKTL) coordinates ATP. Residues 593–594 (YL) form a docks into pockets in the proteasome alpha-ring region.

The protein belongs to the AAA ATPase family. In terms of assembly, homohexamer. Assembles into a hexameric ring structure that caps the 20S proteasome core. Strongly interacts with the prokaryotic ubiquitin-like protein Pup through a hydrophobic interface; the interacting region of ARC lies in its N-terminal coiled-coil domain. There is one Pup binding site per ARC hexamer ring. Upon ATP-binding, the C-terminus of ARC interacts with the alpha-rings of the proteasome core, possibly by binding to the intersubunit pockets.

The protein operates within protein degradation; proteasomal Pup-dependent pathway. In terms of biological role, ATPase which is responsible for recognizing, binding, unfolding and translocation of pupylated proteins into the bacterial 20S proteasome core particle. May be essential for opening the gate of the 20S proteasome via an interaction with its C-terminus, thereby allowing substrate entry and access to the site of proteolysis. Thus, the C-termini of the proteasomal ATPase may function like a 'key in a lock' to induce gate opening and therefore regulate proteolysis. This is Proteasome-associated ATPase from Catenulispora acidiphila (strain DSM 44928 / JCM 14897 / NBRC 102108 / NRRL B-24433 / ID139908).